Reading from the N-terminus, the 760-residue chain is Prolyl endopeptidase FAP (760 aa).

Over Met-1 to Trp-4 the chain is Cytoplasmic. Residues Leu-5 to Val-25 traverse the membrane as a helical; Signal-anchor for type II membrane protein segment. Residues Leu-26–Asp-760 are Extracellular-facing. N-linked (GlcNAc...) asparagine glycans are attached at residues Asn-49, Asn-92, and Asn-99. The substrate site is built by Glu-203 and Glu-204. Residues Asn-227 and Asn-314 are each glycosylated (N-linked (GlcNAc...) asparagine). 3 disulfide bridges follow: Cys-321/Cys-332, Cys-438/Cys-441, and Cys-448/Cys-466. The stretch at Thr-481 to Lys-512 forms a coiled coil. Residue Ser-624 is the Charge relay system of the active site. Residues Cys-643 and Cys-755 are joined by a disulfide bond. The N-linked (GlcNAc...) asparagine glycan is linked to Asn-679. Active-site charge relay system residues include Asp-702 and His-734.

The protein belongs to the peptidase S9B family. As to quaternary structure, homodimer; homodimerization is required for activity of both plasma membrane and soluble forms. The monomer is inactive. Heterodimer with DPP4. Interacts with PLAUR; the interaction occurs at the cell surface of invadopodia membranes. Interacts with ITGB1. Interacts with ITGA3. Associates with integrin alpha-3/beta-1; the association occurs in a collagen-dependent manner at the cell surface of invadopodia membranes. Post-translationally, N-glycosylated. In terms of processing, the N-terminus may be blocked.

It is found in the cell surface. Its subcellular location is the cell membrane. It localises to the cell projection. The protein resides in the lamellipodium membrane. The protein localises to the invadopodium membrane. It is found in the ruffle membrane. Its subcellular location is the membrane. It localises to the secreted. The enzyme catalyses Release of an N-terminal dipeptide, Xaa-Yaa-|-Zaa-, from a polypeptide, preferentially when Yaa is Pro, provided Zaa is neither Pro nor hydroxyproline.. It catalyses the reaction Hydrolysis of Pro-|-Xaa &gt;&gt; Ala-|-Xaa in oligopeptides.. With respect to regulation, gelatinase activity is inhibited by serine-protease inhibitors, such as phenylmethylsulfonyl fluoride (PMSF), 4-(2-aminoethyl)-benzenesulfonyl fluoride hydrochloride (AEBSF), 4-amidino phenylsulfonyl fluoride (APSF) and diisopropyl fluorophosphate (DFP), N-ethylmaleimide (NEM) and phenylmethylsulfonyl fluoride (PMSF). Dipeptidyl peptidase activity is inhibited by 2,2'-azino-bis(3-ethylbenzthiazoline-6-sulfonic acid), diisopropylfluorophosphate (DFP). Prolyl endopeptidase activity is inhibited by the boronic acid peptide Ac-Gly-BoroPro, Ac-Gly-Pro-chloromethyl ketone and Thr-Ser-Gly-chloromethyl ketone. Functionally, cell surface glycoprotein serine protease that participates in extracellular matrix degradation and involved in many cellular processes including tissue remodeling, fibrosis, wound healing, inflammation and tumor growth. Both plasma membrane and soluble forms exhibit post-proline cleaving endopeptidase activity, with a marked preference for Ala/Ser-Gly-Pro-Ser/Asn/Ala consensus sequences, on substrate such as alpha-2-antiplasmin SERPINF2 and SPRY2. Degrade also gelatin, heat-denatured type I collagen, but not native collagen type I and IV, vibronectin, tenascin, laminin, fibronectin, fibrin or casein. Also has dipeptidyl peptidase activity, exhibiting the ability to hydrolyze the prolyl bond two residues from the N-terminus of synthetic dipeptide substrates provided that the penultimate residue is proline, with a preference for Ala-Pro, Ile-Pro, Gly-Pro, Arg-Pro and Pro-Pro. Natural neuropeptide hormones for dipeptidyl peptidase are the neuropeptide Y (NPY), peptide YY (PYY), substance P (TAC1) and brain natriuretic peptide 32 (NPPB). The plasma membrane form, in association with either DPP4, PLAUR or integrins, is involved in the pericellular proteolysis of the extracellular matrix (ECM), and hence promotes cell adhesion, migration and invasion through the ECM. Plays a role in tissue remodeling during development and wound healing. Participates in the cell invasiveness towards the ECM in malignant melanoma cancers. Enhances tumor growth progression by increasing angiogenesis, collagen fiber degradation and apoptosis and by reducing antitumor response of the immune system. Promotes glioma cell invasion through the brain parenchyma by degrading the proteoglycan brevican. Acts as a tumor suppressor in melanocytic cells through regulation of cell proliferation and survival in a serine protease activity-independent manner. This Bos taurus (Bovine) protein is Prolyl endopeptidase FAP.